Consider the following 132-residue polypeptide: Small ribosomal subunit protein uS8 (132 aa).

It belongs to the universal ribosomal protein uS8 family. As to quaternary structure, part of the 30S ribosomal subunit. Contacts proteins S5 and S12.

One of the primary rRNA binding proteins, it binds directly to 16S rRNA central domain where it helps coordinate assembly of the platform of the 30S subunit. In Francisella tularensis subsp. tularensis (strain FSC 198), this protein is Small ribosomal subunit protein uS8.